Consider the following 356-residue polypeptide: UDP-N-acetylglucosamine--N-acetylmuramyl-(pentapeptide) pyrophosphoryl-undecaprenol N-acetylglucosamine transferase (356 aa).

UDP-N-acetyl-alpha-D-glucosamine is bound by residues serine 195 and glutamine 287.

The protein belongs to the glycosyltransferase 28 family. MurG subfamily.

The protein resides in the cell membrane. It catalyses the reaction Mur2Ac(oyl-L-Ala-gamma-D-Glu-L-Lys-D-Ala-D-Ala)-di-trans,octa-cis-undecaprenyl diphosphate + UDP-N-acetyl-alpha-D-glucosamine = beta-D-GlcNAc-(1-&gt;4)-Mur2Ac(oyl-L-Ala-gamma-D-Glu-L-Lys-D-Ala-D-Ala)-di-trans,octa-cis-undecaprenyl diphosphate + UDP + H(+). It participates in cell wall biogenesis; peptidoglycan biosynthesis. Functionally, cell wall formation. Catalyzes the transfer of a GlcNAc subunit on undecaprenyl-pyrophosphoryl-MurNAc-pentapeptide (lipid intermediate I) to form undecaprenyl-pyrophosphoryl-MurNAc-(pentapeptide)GlcNAc (lipid intermediate II). The polypeptide is UDP-N-acetylglucosamine--N-acetylmuramyl-(pentapeptide) pyrophosphoryl-undecaprenol N-acetylglucosamine transferase (Streptococcus gordonii (strain Challis / ATCC 35105 / BCRC 15272 / CH1 / DL1 / V288)).